The sequence spans 652 residues: Probable potassium transport system protein Kup (652 aa).

Low complexity predominate over residues 1–20 (MSNDTSPGTSSVDSKSSDPS). The interval 1-26 (MSNDTSPGTSSVDSKSSDPSYGVPGH) is disordered. A run of 12 helical transmembrane segments spans residues 36 to 56 (LSLG…LYAL), 76 to 96 (LVSL…VMFI), 125 to 145 (WLIV…MITP), 161 to 181 (PSFD…LFCI), 193 to 213 (FGPI…FNII), 228 to 248 (AIHF…SVVL), 270 to 290 (LGWY…QCAL), 314 to 334 (LIIL…TGAF), 362 to 382 (IYIP…IAMF), 391 to 411 (AYGI…GVLV), 419 to 439 (AWQS…FFLS), and 444 to 464 (IPEG…MLMT).

The protein belongs to the HAK/KUP transporter (TC 2.A.72) family.

It localises to the cell inner membrane. The catalysed reaction is K(+)(in) + H(+)(in) = K(+)(out) + H(+)(out). Its function is as follows. Transport of potassium into the cell. Likely operates as a K(+):H(+) symporter. This chain is Probable potassium transport system protein Kup, found in Zymomonas mobilis subsp. mobilis (strain ATCC 31821 / ZM4 / CP4).